The sequence spans 677 residues: NADPH--cytochrome P450 reductase (677 aa).

An N-acetylglycine modification is found at G2. At 2–21 (GDSHVDTSSTVSEAVAEEVS) the chain is on the lumenal side. The chain crosses the membrane as a helical span at residues 22–42 (LFSMTDMILFSLIVGLLTYWF). At 43–677 (LFRKKKEEVP…KGRYSLDVWS (635 aa)) the chain is on the cytoplasmic side. S63 carries the post-translational modification Phosphoserine. The 145-residue stretch at 80–224 (IIVFYGSQTG…DFITWREQFW (145 aa)) folds into the Flavodoxin-like domain. FMN is bound by residues 86 to 91 (SQTGTA), 138 to 141 (ATYG), 173 to 182 (LGNKTYEHFN), and D208. The FAD-binding FR-type domain maps to 279-521 (KNPFLAAVTT…FVRKSQFRLP (243 aa)). An NADP(+)-binding site is contributed by R298. Residues R424, 454–457 (RYYS), 472–474 (CAV), Y478, and 488–491 (GVAT) contribute to the FAD site. NADP(+) is bound by residues T535, 596–597 (SR), 602–606 (KVYVQ), and D638. W676 lines the FAD pocket.

This sequence belongs to the NADPH--cytochrome P450 reductase family. The protein in the N-terminal section; belongs to the flavodoxin family. It in the C-terminal section; belongs to the flavoprotein pyridine nucleotide cytochrome reductase family. Requires FAD as cofactor. It depends on FMN as a cofactor.

Its subcellular location is the endoplasmic reticulum membrane. The catalysed reaction is 2 oxidized [cytochrome P450] + NADPH = 2 reduced [cytochrome P450] + NADP(+) + H(+). Its function is as follows. This enzyme is required for electron transfer from NADP to cytochrome P450 in microsomes. It can also provide electron transfer to heme oxygenase and cytochrome B5. This chain is NADPH--cytochrome P450 reductase, found in Homo sapiens (Human).